The sequence spans 370 residues: MPYNGIDNYRHNEPDRLGVLITNLGTPDAPTTPALRKYLAEFLWDPRVVEVPRPLWWLILHGVILRIRPRKSAEAYASVWEKDGSPLLIHTAKQAEGIREAMKQRFGTNVVVGFAMRYGNPSIPRVLEEMQQQGVRKLLILPLYPQYSASTTASTFDAISKDFTRRRWLPDFRFISHYHDFPPYIEAMARHIESHWAEHGRKEKLILSYHGVPLKYLLKGDPYHCECHKTSRLLAERLGLGKDQYMTTFQSRFGREEWLQPYTDETLKALPGKGVKSIDVFCPGFSADCLETIEEINEENREYFMESGGEGFSYIPCLNATPGHIDALVQLVEDNLQGWDIPENTPESLEQRATLAEERKQATFPGRSDI.

Residues His-210 and Glu-291 each contribute to the Fe cation site.

This sequence belongs to the ferrochelatase family.

It is found in the cytoplasm. It catalyses the reaction heme b + 2 H(+) = protoporphyrin IX + Fe(2+). It participates in porphyrin-containing compound metabolism; protoheme biosynthesis; protoheme from protoporphyrin-IX: step 1/1. Its function is as follows. Catalyzes the ferrous insertion into protoporphyrin IX. This is Ferrochelatase from Marinobacter nauticus (strain ATCC 700491 / DSM 11845 / VT8) (Marinobacter aquaeolei).